A 499-amino-acid polypeptide reads, in one-letter code: Maturase K (499 aa).

This sequence belongs to the intron maturase 2 family. MatK subfamily.

It is found in the plastid. It localises to the chloroplast. Functionally, usually encoded in the trnK tRNA gene intron. Probably assists in splicing its own and other chloroplast group II introns. In Gymnocladus chinensis (Soap tree), this protein is Maturase K.